An 88-amino-acid polypeptide reads, in one-letter code: Small ribosomal subunit protein bS20 (88 aa).

Positions 1–28 (MANTSSAKKATRKIARRTAVNKSRRTQM) are disordered.

Binds directly to 16S ribosomal RNA. This chain is Small ribosomal subunit protein bS20, found in Rhodopseudomonas palustris (strain ATCC BAA-98 / CGA009).